Reading from the N-terminus, the 434-residue chain is Enolase (434 aa).

Residues His158 and Glu167 each contribute to the substrate site. The Proton donor role is filled by Glu210. Residues Asp245, Glu294, and Asp319 each contribute to the Mg(2+) site. Glu294 and Asp319 together coordinate substrate. Lys344 (proton acceptor) is an active-site residue. Residues 371 to 374 (SHRS) and Lys395 contribute to the substrate site.

It belongs to the enolase family. As to quaternary structure, homodimer. The cofactor is Mg(2+).

The protein localises to the cytoplasm. The catalysed reaction is (2R)-2-phosphoglycerate = phosphoenolpyruvate + H2O. It functions in the pathway carbohydrate degradation; glycolysis; pyruvate from D-glyceraldehyde 3-phosphate: step 4/5. In Schistosoma mansoni (Blood fluke), this protein is Enolase (ENO).